Reading from the N-terminus, the 150-residue chain is Transcriptional repressor NrdR (150 aa).

A zinc finger lies at 3–34 (CPFCAFADSKVVDSRPDKEGSTIRRRRECESC). In terms of domain architecture, ATP-cone spans 49-139 (PLVIKKDGRR…VYRSFKDITE (91 aa)).

The protein belongs to the NrdR family. Requires Zn(2+) as cofactor.

Its function is as follows. Negatively regulates transcription of bacterial ribonucleotide reductase nrd genes and operons by binding to NrdR-boxes. The chain is Transcriptional repressor NrdR from Geotalea daltonii (strain DSM 22248 / JCM 15807 / FRC-32) (Geobacter daltonii).